Here is a 210-residue protein sequence, read N- to C-terminus: Superoxide dismutase [Mn], mitochondrial (210 aa).

H29, H77, D164, and H168 together coordinate Mn(2+).

The protein belongs to the iron/manganese superoxide dismutase family. In terms of assembly, homotetramer. Requires Mn(2+) as cofactor.

It is found in the mitochondrion matrix. It carries out the reaction 2 superoxide + 2 H(+) = H2O2 + O2. In terms of biological role, destroys superoxide anion radicals which are normally produced within the cells and which are toxic to biological systems. The chain is Superoxide dismutase [Mn], mitochondrial (sodB) from Aspergillus oryzae (strain ATCC 42149 / RIB 40) (Yellow koji mold).